A 282-amino-acid chain; its full sequence is Probable endonuclease 4 (282 aa).

Positions 66, 106, 143, 177, 180, 214, 227, 229, and 259 each coordinate Zn(2+).

This sequence belongs to the AP endonuclease 2 family. It depends on Zn(2+) as a cofactor.

It carries out the reaction Endonucleolytic cleavage to 5'-phosphooligonucleotide end-products.. In terms of biological role, endonuclease IV plays a role in DNA repair. It cleaves phosphodiester bonds at apurinic or apyrimidinic (AP) sites, generating a 3'-hydroxyl group and a 5'-terminal sugar phosphate. This is Probable endonuclease 4 from Nitratidesulfovibrio vulgaris (strain DP4) (Desulfovibrio vulgaris).